A 428-amino-acid polypeptide reads, in one-letter code: Histidine--tRNA ligase (428 aa).

The protein belongs to the class-II aminoacyl-tRNA synthetase family. Homodimer.

The protein resides in the cytoplasm. It carries out the reaction tRNA(His) + L-histidine + ATP = L-histidyl-tRNA(His) + AMP + diphosphate + H(+). This Lactobacillus delbrueckii subsp. bulgaricus (strain ATCC BAA-365 / Lb-18) protein is Histidine--tRNA ligase.